The following is a 261-amino-acid chain: Adenosylcobinamide-GDP ribazoletransferase (261 aa).

5 helical membrane passes run 12–32 (NLFF…WVVI), 46–66 (LVGL…QLIL), 67–87 (PASI…GAFH), 120–140 (GALS…ELAL), and 199–219 (IFVL…TLWL).

The protein belongs to the CobS family. It depends on Mg(2+) as a cofactor.

The protein localises to the cell inner membrane. The enzyme catalyses alpha-ribazole + adenosylcob(III)inamide-GDP = adenosylcob(III)alamin + GMP + H(+). The catalysed reaction is alpha-ribazole 5'-phosphate + adenosylcob(III)inamide-GDP = adenosylcob(III)alamin 5'-phosphate + GMP + H(+). It functions in the pathway cofactor biosynthesis; adenosylcobalamin biosynthesis; adenosylcobalamin from cob(II)yrinate a,c-diamide: step 7/7. In terms of biological role, joins adenosylcobinamide-GDP and alpha-ribazole to generate adenosylcobalamin (Ado-cobalamin). Also synthesizes adenosylcobalamin 5'-phosphate from adenosylcobinamide-GDP and alpha-ribazole 5'-phosphate. This chain is Adenosylcobinamide-GDP ribazoletransferase, found in Shewanella frigidimarina (strain NCIMB 400).